The sequence spans 391 residues: S-adenosylmethionine synthase 1 (391 aa).

Glu-9 is a binding site for Mg(2+). Residue His-15 coordinates ATP. A K(+)-binding site is contributed by Glu-43. Residues Glu-56 and Gln-99 each contribute to the L-methionine site. ATP is bound by residues 167-169, 235-238, Asp-246, 252-253, Ala-269, Lys-273, and Lys-277; these read DGK, SGRF, and RK. Asp-246 serves as a coordination point for L-methionine. Lys-277 serves as a coordination point for L-methionine.

Belongs to the AdoMet synthase family. In terms of assembly, homotetramer. Mn(2+) serves as cofactor. Requires Mg(2+) as cofactor. The cofactor is Co(2+). K(+) is required as a cofactor.

It localises to the cytoplasm. It catalyses the reaction L-methionine + ATP + H2O = S-adenosyl-L-methionine + phosphate + diphosphate. The protein operates within amino-acid biosynthesis; S-adenosyl-L-methionine biosynthesis; S-adenosyl-L-methionine from L-methionine: step 1/1. Catalyzes the formation of S-adenosylmethionine from methionine and ATP. The reaction comprises two steps that are both catalyzed by the same enzyme: formation of S-adenosylmethionine (AdoMet) and triphosphate, and subsequent hydrolysis of the triphosphate. This is S-adenosylmethionine synthase 1 (METK1) from Vitis vinifera (Grape).